The following is a 277-amino-acid chain: Urease accessory protein UreD (277 aa).

This sequence belongs to the UreD family. UreD, UreF and UreG form a complex that acts as a GTP-hydrolysis-dependent molecular chaperone, activating the urease apoprotein by helping to assemble the nickel containing metallocenter of UreC. The UreE protein probably delivers the nickel.

The protein resides in the cytoplasm. Required for maturation of urease via the functional incorporation of the urease nickel metallocenter. This is Urease accessory protein UreD from Flavobacterium johnsoniae (strain ATCC 17061 / DSM 2064 / JCM 8514 / BCRC 14874 / CCUG 350202 / NBRC 14942 / NCIMB 11054 / UW101) (Cytophaga johnsonae).